The following is a 169-amino-acid chain: Deoxyuridine 5'-triphosphate nucleotidohydrolase (169 aa).

Polar residues predominate over residues 1–10 (MAENQINSPE). The interval 1–25 (MAENQINSPEITEPSPKVQKLDHPE) is disordered. Residues 91–93 (RSG), 105–108 (GVID), glycine 116, arginine 159, and 164–165 (FG) each bind substrate.

This sequence belongs to the dUTPase family. Homodimer. Mg(2+) is required as a cofactor. Vegetative and floral merismatic cells and provascular and vascular merismatic derivatives.

The enzyme catalyses dUTP + H2O = dUMP + diphosphate + H(+). It participates in pyrimidine metabolism; dUMP biosynthesis; dUMP from dCTP (dUTP route): step 2/2. Functionally, this enzyme is involved in nucleotide metabolism: it produces dUMP, the immediate precursor of thymidine nucleotides and it decreases the intracellular concentration of dUTP so that uracil cannot be incorporated into DNA. It may have as well a metabolic role in merismatic cells. The polypeptide is Deoxyuridine 5'-triphosphate nucleotidohydrolase (Solanum lycopersicum (Tomato)).